Consider the following 433-residue polypeptide: MLRIITQQADVKAELQRICDRTHDEQVLHKEATVREVLQAVKRQGDKAVLHYTDEFDNQILKAEELRVTGSELDAAYQQVSKELLEAIQLASRQIEAFHRQRVPKSWVHFGDDDIVLGKRYTPVDRAGLYVPGGRAAYVSTVLMNAIPAKVAGVPRIVMATPPGAQKAINPAVLVAAQEVGVQEIYRVGGAQAIAALAYGTETIPKVDVITGPGNIYVTLAKKLVYGTVGIDSLAGPSEVLIIADEGANPVHVATDMLAQAEHDPMAAAILFTTDPALAKNVQVAVERQLVDHPRRIDTEKAIAHYGLIVLVESLDAAAELSNEFAPEHLELEVKDPWAVLPNIRHAGAIFLGYSTPEAVGDYLAGPNHTLPTSGAARYASALSVETFLKHSSIIQYSQTALNKVAGAIDALATAEGLPSHADSVKRRIQQDE.

NAD(+) is bound by residues Tyr-130, Gln-192, and Asn-215. Substrate contacts are provided by Ser-238, Gln-260, and His-263. Zn(2+) contacts are provided by Gln-260 and His-263. Active-site proton acceptor residues include Glu-328 and His-329. Positions 329, 362, 416, and 421 each coordinate substrate. Residue Asp-362 coordinates Zn(2+). His-421 is a Zn(2+) binding site.

The protein belongs to the histidinol dehydrogenase family. Requires Zn(2+) as cofactor.

The enzyme catalyses L-histidinol + 2 NAD(+) + H2O = L-histidine + 2 NADH + 3 H(+). It participates in amino-acid biosynthesis; L-histidine biosynthesis; L-histidine from 5-phospho-alpha-D-ribose 1-diphosphate: step 9/9. Catalyzes the sequential NAD-dependent oxidations of L-histidinol to L-histidinaldehyde and then to L-histidine. This Trichormus variabilis (strain ATCC 29413 / PCC 7937) (Anabaena variabilis) protein is Histidinol dehydrogenase 2.